The primary structure comprises 133 residues: Large ribosomal subunit protein uL15 (133 aa).

The disordered stretch occupies residues 1–62; it reads MALHNLQPAP…GQQPLQRRLP (62 aa). Polar residues predominate over residues 32–45; that stretch reads TRGQKGQKSRTGYS.

It belongs to the universal ribosomal protein uL15 family. Part of the 50S ribosomal subunit.

In terms of biological role, binds to the 23S rRNA. The polypeptide is Large ribosomal subunit protein uL15 (Nitratiruptor sp. (strain SB155-2)).